A 448-amino-acid chain; its full sequence is tRNA(Ile)-lysidine synthase (448 aa).

ATP is bound at residue 25 to 30 (SGGSDS).

The protein belongs to the tRNA(Ile)-lysidine synthase family.

The protein localises to the cytoplasm. The enzyme catalyses cytidine(34) in tRNA(Ile2) + L-lysine + ATP = lysidine(34) in tRNA(Ile2) + AMP + diphosphate + H(+). Its function is as follows. Ligates lysine onto the cytidine present at position 34 of the AUA codon-specific tRNA(Ile) that contains the anticodon CAU, in an ATP-dependent manner. Cytidine is converted to lysidine, thus changing the amino acid specificity of the tRNA from methionine to isoleucine. This is tRNA(Ile)-lysidine synthase from Brucella abortus (strain S19).